The primary structure comprises 251 residues: Small ribosomal subunit protein uS2 (251 aa).

This sequence belongs to the universal ribosomal protein uS2 family.

This chain is Small ribosomal subunit protein uS2, found in Synechococcus sp. (strain ATCC 27144 / PCC 6301 / SAUG 1402/1) (Anacystis nidulans).